Consider the following 377-residue polypeptide: Succinyl-diaminopimelate desuccinylase (377 aa).

His66 provides a ligand contact to Zn(2+). Asp68 is a catalytic residue. Residue Asp99 participates in Zn(2+) binding. The Proton acceptor role is filled by Glu133. 3 residues coordinate Zn(2+): Glu134, Glu162, and His348.

The protein belongs to the peptidase M20A family. DapE subfamily. As to quaternary structure, homodimer. It depends on Zn(2+) as a cofactor. The cofactor is Co(2+).

The catalysed reaction is N-succinyl-(2S,6S)-2,6-diaminopimelate + H2O = (2S,6S)-2,6-diaminopimelate + succinate. Its pathway is amino-acid biosynthesis; L-lysine biosynthesis via DAP pathway; LL-2,6-diaminopimelate from (S)-tetrahydrodipicolinate (succinylase route): step 3/3. Catalyzes the hydrolysis of N-succinyl-L,L-diaminopimelic acid (SDAP), forming succinate and LL-2,6-diaminopimelate (DAP), an intermediate involved in the bacterial biosynthesis of lysine and meso-diaminopimelic acid, an essential component of bacterial cell walls. This Chromobacterium violaceum (strain ATCC 12472 / DSM 30191 / JCM 1249 / CCUG 213 / NBRC 12614 / NCIMB 9131 / NCTC 9757 / MK) protein is Succinyl-diaminopimelate desuccinylase.